Reading from the N-terminus, the 180-residue chain is Cytidylate kinase (180 aa).

7–15 lines the ATP pocket; it reads GPPGSGTTT.

This sequence belongs to the cytidylate kinase family. Type 2 subfamily.

Its subcellular location is the cytoplasm. The catalysed reaction is CMP + ATP = CDP + ADP. The enzyme catalyses dCMP + ATP = dCDP + ADP. The protein is Cytidylate kinase (cmk) of Archaeoglobus fulgidus (strain ATCC 49558 / DSM 4304 / JCM 9628 / NBRC 100126 / VC-16).